The sequence spans 538 residues: MSRLSSIYSQHRTSGLRSDRSIMPNSTSNSLRTISSVHLPYNHRARNFHISHAVGDSSEHVIINGQASPSKVVQADAAALGTIAADMAPVVDGFSADDDELDLDSPTEGFSSIPEAIEDIRQGKYVIVVDDEDRENEGDLIMAASKVTPEAMAFIVRHGTGIVCVSMKEDDLERLELPLMVTTKENEEKLRTAFTVSVDAKEGTTTGVSAKDRANTVLALASPNSKPEDFNRPGHIFPLKYREGGVLKRAGHTEASVDLAMLAGLPPAAVLCEIVDDDDGSMALLPKLQDFARRENLKIISIADLIRYRRKRDRLVERVCVTPLQLQWGSFQSYCYRSLIDGMEHIAMVKGDVGDGQDILVRVHSECLTGDIFGSARCDCGNQLALAMTMIEKTGRGVVVYLRGHEGRGIGLGHKLRAYNLQDDGRDTVEANEDLGLPVDSREYGIGAQILRDLGVRTMRLMTNNPAKYTGLKGYGLSVLGRVPLLTPITNENRRYMETKRLKMGHVYGTRPSGNTSTLADGGIKKEQDQIDSASEQE.

A compositionally biased stretch (polar residues) spans 1-16 (MSRLSSIYSQHRTSGL). The interval 1–29 (MSRLSSIYSQHRTSGLRSDRSIMPNSTSN) is disordered. A chloroplast-targeting transit peptide spans 1-73 (MSRLSSIYSQ…NGQASPSKVV (73 aa)). The interval 46–311 (RNFHISHAVG…IADLIRYRRK (266 aa)) is DHBP synthase. Residues 134–135 (RE), aspartate 139, 249–253 (RAGHT), and glutamate 273 contribute to the D-ribulose 5-phosphate site. Residue glutamate 135 participates in Mg(2+) binding. Residue histidine 252 participates in Mg(2+) binding. Positions 312–530 (RDRLVERVCV…DGGIKKEQDQ (219 aa)) are GTP cyclohydrolase II. 362–366 (RVHSE) lines the GTP pocket. 3 residues coordinate Zn(2+): cysteine 367, cysteine 378, and cysteine 380. GTP contacts are provided by residues glutamine 383, 406–408 (EGR), and threonine 428. Aspartate 440 acts as the Proton acceptor; for GTP cyclohydrolase activity in catalysis. Residue arginine 442 is the Nucleophile; for GTP cyclohydrolase activity of the active site. Positions 463 and 468 each coordinate GTP. The tract at residues 506–538 (HVYGTRPSGNTSTLADGGIKKEQDQIDSASEQE) is disordered.

In the N-terminal section; belongs to the DHBP synthase family. It in the C-terminal section; belongs to the GTP cyclohydrolase II family. It depends on Mg(2+) as a cofactor. Mn(2+) serves as cofactor. The cofactor is Zn(2+).

The protein resides in the plastid. It is found in the chloroplast. The catalysed reaction is D-ribulose 5-phosphate = (2S)-2-hydroxy-3-oxobutyl phosphate + formate + H(+). It catalyses the reaction GTP + 4 H2O = 2,5-diamino-6-hydroxy-4-(5-phosphoribosylamino)-pyrimidine + formate + 2 phosphate + 3 H(+). It functions in the pathway cofactor biosynthesis; riboflavin biosynthesis; 2-hydroxy-3-oxobutyl phosphate from D-ribulose 5-phosphate: step 1/1. It participates in cofactor biosynthesis; riboflavin biosynthesis; 5-amino-6-(D-ribitylamino)uracil from GTP: step 1/4. Its function is as follows. Involved in riboflavin biosynthesis. Catalyzes both the conversion of D-ribulose 5-phosphate to formate and 3,4-dihydroxy-2-butanone 4-phosphate and the conversion of GTP to 2,5-diamino-6-ribosylamino-4(3H)-pyrimidinone 5'-phosphate (DARP), formate and pyrophosphate. The protein is Probable bifunctional riboflavin biosynthesis protein RIBA 1, chloroplastic (RIBA1) of Oryza sativa subsp. japonica (Rice).